A 293-amino-acid polypeptide reads, in one-letter code: Small ribosomal subunit protein uS2 (293 aa).

Residues 265–293 form a disordered region; that stretch reads DGGDWAASSAPAPGGENWAEAQPAEGAKW.

The protein belongs to the universal ribosomal protein uS2 family. As to quaternary structure, component of the small ribosomal subunit. Mature ribosomes consist of a small (40S) and a large (60S) subunit. The 40S subunit contains about 33 different proteins and 1 molecule of RNA (18S). The 60S subunit contains about 49 different proteins and 3 molecules of RNA (25S, 5.8S and 5S). Interacts with rps21.

It localises to the cytoplasm. Its function is as follows. Required for the assembly and/or stability of the 40S ribosomal subunit. Required for the processing of the 20S rRNA-precursor to mature 18S rRNA in a late step of the maturation of 40S ribosomal subunits. The protein is Small ribosomal subunit protein uS2 (rps0) of Emericella nidulans (strain FGSC A4 / ATCC 38163 / CBS 112.46 / NRRL 194 / M139) (Aspergillus nidulans).